A 77-amino-acid chain; its full sequence is Large ribosomal subunit protein uL24c (77 aa).

This sequence belongs to the universal ribosomal protein uL24 family. In terms of assembly, part of the 50S ribosomal subunit.

It localises to the plastid. The protein resides in the chloroplast. Functionally, one of two assembly initiator proteins, it binds directly to the 5'-end of the 23S rRNA, where it nucleates assembly of the 50S subunit. The polypeptide is Large ribosomal subunit protein uL24c (rpl24) (Thalassiosira pseudonana (Marine diatom)).